Here is a 272-residue protein sequence, read N- to C-terminus: MMACHC-like protein (272 aa).

Substrate-binding positions include D121, 132–135, and 146–148; these read ILMQ and YYQ.

It belongs to the MMACHC family. FAD serves as cofactor. It depends on FMN as a cofactor.

The protein resides in the cytoplasm. Catalyzes the reductive dealkylation of cyanocobalamin to cob(II)alamin, using FAD or FMN as cofactor and NADPH as cosubstrate. Can also catalyze the glutathione-dependent reductive demethylation of methylcobalamin, and, with much lower efficiency, the glutathione-dependent reductive demethylation of adenosylcobalamin. Under anaerobic conditions cob(I)alamin is the first product; it is highly reactive and is converted to aquocob(II)alamin in the presence of oxygen. Binds cyanocobalamin, adenosylcobalamin, methylcobalamin and other, related vitamin B12 derivatives. This Caenorhabditis elegans protein is MMACHC-like protein (cblc-1).